The primary structure comprises 192 residues: MAAEPEDNCISFVEMKFINNTLYFVAENDEDLESDYFGKLEPKLSIIRNLNDQVLFINQGHQAVFEDMPDSDCSDNAPQTVFIIYMYKDSLTRGLAVTISVQCKKMSTLSCKNKTLSFKEMSPPDNIDDEGNDIIFFQRSVPGHDDKIQFESSLYKGYFLACKKENDLFKLILKEKDECGDKSIMFTVQNKN.

A propeptide spanning residues 1–35 is cleaved from the precursor; it reads MAAEPEDNCISFVEMKFINNTLYFVAENDEDLESD.

It belongs to the IL-1 family. As to quaternary structure, forms a ternary complex with ligand-binding receptor subunit IL18R1 and signaling receptor subunit IL18RAP at the plasma membrane. Mature IL18 first binds to IL18R1 forming a low affinity binary complex, which then interacts with IL18RAP to form a high affinity ternary complex that signals inside the cell. Interacts with cargo receptor TMED10; the interaction mediates the translocation from the cytoplasm into the ERGIC (endoplasmic reticulum-Golgi intermediate compartment) and thereby secretion. Post-translationally, the pro-IL-18 precursor is processed by CASP1, CASP4 or CASP5 to yield its mature, active form. The pro-IL-18 precursor features autoinhibitory interactions between the propeptide and the post-cleavage-site region, preventing recognition by the IL18R1 receptor. Processing by CASP1, CASP4 or CASP5 induces conformational changes to generate critical receptor-binding sites. The mature form is then secreted and released in the extracellular milieu by passing through the gasdermin-D (GSDMD) pore. In contrast, cleavage by CASP3 inactivates IL18.

The protein resides in the cytoplasm. It is found in the cytosol. It localises to the secreted. Pro-inflammatory cytokine primarily involved in epithelial barrier repair, polarized T-helper 1 (Th1) cell and natural killer (NK) cell immune responses. Upon binding to IL18R1 and IL18RAP, forms a signaling ternary complex which activates NF-kappa-B, triggering synthesis of inflammatory mediators. Synergizes with IL12/interleukin-12 to induce IFNG synthesis from T-helper 1 (Th1) cells and natural killer (NK) cells. Involved in transduction of inflammation downstream of pyroptosis: its mature form is specifically released in the extracellular milieu by passing through the gasdermin-D (GSDMD) pore. This Sus scrofa (Pig) protein is Interleukin-18 (IL18).